Here is a 299-residue protein sequence, read N- to C-terminus: Aliphatic sulfonates import ATP-binding protein SsuB (299 aa).

An ABC transporter domain is found at 36-257; the sequence is LHVQQVIKRY…QHGSAAFAQI (222 aa). 68 to 75 provides a ligand contact to ATP; that stretch reads GRSGCGKS.

It belongs to the ABC transporter superfamily. Aliphatic sulfonates importer (TC 3.A.1.17.2) family. As to quaternary structure, the complex is composed of two ATP-binding proteins (SsuB), two transmembrane proteins (SsuC) and a solute-binding protein (SsuA).

It is found in the cell inner membrane. It carries out the reaction ATP + H2O + aliphatic sulfonate-[sulfonate-binding protein]Side 1 = ADP + phosphate + aliphatic sulfonateSide 2 + [sulfonate-binding protein]Side 1.. Its function is as follows. Part of the ABC transporter complex SsuABC involved in aliphatic sulfonates import. Responsible for energy coupling to the transport system. The sequence is that of Aliphatic sulfonates import ATP-binding protein SsuB from Cupriavidus pinatubonensis (strain JMP 134 / LMG 1197) (Cupriavidus necator (strain JMP 134)).